Reading from the N-terminus, the 309-residue chain is Ribonuclease Z (309 aa).

The Zn(2+) site is built by H63, H65, D67, H68, H141, D212, and H270. Catalysis depends on D67, which acts as the Proton acceptor.

This sequence belongs to the RNase Z family. As to quaternary structure, homodimer. Requires Zn(2+) as cofactor.

It carries out the reaction Endonucleolytic cleavage of RNA, removing extra 3' nucleotides from tRNA precursor, generating 3' termini of tRNAs. A 3'-hydroxy group is left at the tRNA terminus and a 5'-phosphoryl group is left at the trailer molecule.. Its function is as follows. Zinc phosphodiesterase, which displays some tRNA 3'-processing endonuclease activity. Probably involved in tRNA maturation, by removing a 3'-trailer from precursor tRNA. In Limosilactobacillus reuteri (strain DSM 20016) (Lactobacillus reuteri), this protein is Ribonuclease Z.